Reading from the N-terminus, the 392-residue chain is Major outer membrane porin (392 aa).

An N-terminal signal peptide occupies residues 1 to 22; that stretch reads MKKLLKSALLFAAAGSALSLQA.

Belongs to the chlamydial porin (CP) (TC 1.B.2) family. Part of a disulfide cross-linked outer membrane complex (COMC) composed of the major outer membrane porin (MOMP), the small cysteine-rich protein (OmcA) and the large cysteine-rich periplasmic protein (OmcB).

It localises to the cell outer membrane. In terms of biological role, in elementary bodies (EBs, the infectious stage, which is able to survive outside the host cell) provides the structural integrity of the outer envelope through disulfide cross-links with the small cysteine-rich protein and the large cysteine-rich periplasmic protein. It has been described in publications as the Sarkosyl-insoluble COMC (Chlamydia outer membrane complex), and serves as the functional equivalent of peptidoglycan. Permits diffusion of specific solutes through the outer membrane. The polypeptide is Major outer membrane porin (ompA) (Chlamydia psittaci (Chlamydophila psittaci)).